The sequence spans 236 residues: Leucyl/phenylalanyl-tRNA--protein transferase (236 aa).

Belongs to the L/F-transferase family.

The protein resides in the cytoplasm. It catalyses the reaction N-terminal L-lysyl-[protein] + L-leucyl-tRNA(Leu) = N-terminal L-leucyl-L-lysyl-[protein] + tRNA(Leu) + H(+). The enzyme catalyses N-terminal L-arginyl-[protein] + L-leucyl-tRNA(Leu) = N-terminal L-leucyl-L-arginyl-[protein] + tRNA(Leu) + H(+). It carries out the reaction L-phenylalanyl-tRNA(Phe) + an N-terminal L-alpha-aminoacyl-[protein] = an N-terminal L-phenylalanyl-L-alpha-aminoacyl-[protein] + tRNA(Phe). Its function is as follows. Functions in the N-end rule pathway of protein degradation where it conjugates Leu, Phe and, less efficiently, Met from aminoacyl-tRNAs to the N-termini of proteins containing an N-terminal arginine or lysine. This Yersinia pseudotuberculosis serotype O:1b (strain IP 31758) protein is Leucyl/phenylalanyl-tRNA--protein transferase.